Reading from the N-terminus, the 113-residue chain is Dolichyl-diphosphooligosaccharide--protein glycosyltransferase subunit DAD1 (113 aa).

Topologically, residues 1–30 (MGSSAFEVLTFFLKDYKANTPQKLKIIDAY) are cytoplasmic. Residues 31-51 (LLYILLTGINQFLYCCLVGTF) traverse the membrane as a helical segment. Proline 52 is a topological domain (lumenal). The chain crosses the membrane as a helical span at residues 53–73 (FNSFLSGFISCVASFVLGVCL). At 74–92 (RLQVNPQNSSNFCGIPPER) the chain is on the cytoplasmic side. The helical transmembrane segment at 93–113 (AFADFIFAHVVLHLVVMNFIG) threads the bilayer.

The protein belongs to the DAD/OST2 family. Component of the oligosaccharyltransferase (OST) complex. In terms of tissue distribution, widely expressed. Greatest expression seen in the epidermis, intermediate expression in the fat body and midgut and mild expression observed in the silk gland.

The protein resides in the endoplasmic reticulum membrane. It functions in the pathway protein modification; protein glycosylation. Subunit of the oligosaccharyl transferase (OST) complex that catalyzes the initial transfer of a defined glycan (Glc(3)Man(9)GlcNAc(2) in eukaryotes) from the lipid carrier dolichol-pyrophosphate to an asparagine residue within an Asn-X-Ser/Thr consensus motif in nascent polypeptide chains, the first step in protein N-glycosylation. N-glycosylation occurs cotranslationally and the complex associates with the Sec61 complex at the channel-forming translocon complex that mediates protein translocation across the endoplasmic reticulum (ER). All subunits are required for a maximal enzyme activity. The protein is Dolichyl-diphosphooligosaccharide--protein glycosyltransferase subunit DAD1 of Araneus ventricosus (Orbweaver spider).